The chain runs to 216 residues: Golgi to ER traffic protein 1 (216 aa).

Residues 1 to 9 are Lumenal-facing; the sequence is MFDISSSNL. The chain crosses the membrane as a helical span at residues 10-29; the sequence is LISVLVVLFAKQLINAVGKA. Topologically, residues 30–116 are cytoplasmic; sequence TLENIGWSAY…YISKYIGYMI (87 aa). A coiled-coil region spans residues 54-105; sequence LDQKNVELAKVSKERKSISAQDQYARWTKLNRQFDKLTGEINKLKEETSASR. Residues 117 to 137 traverse the membrane as a helical segment; it reads LVTTTLPIWFFRVWFRKAVLF. The Lumenal portion of the chain corresponds to 138 to 161; that stretch reads YFPTGVLPHYLEWFLALPFITTGG. Residues 162–178 form a helical membrane-spanning segment; it reads VGLTIWMSAVNNVVSSV. Over 179–216 the chain is Cytoplasmic; sequence IFLVKFPFEKEVPFPSKEVGNEKTSINKEEVSGTPAAN. Residues 193-216 are disordered; it reads PSKEVGNEKTSINKEEVSGTPAAN. Residues 197–209 show a composition bias toward basic and acidic residues; sequence VGNEKTSINKEEV.

This sequence belongs to the WRB/GET1 family. Component of the Golgi to ER traffic (GET) complex, which is composed of GET1, GET2 and GET3. Within the complex, GET1 and GET2 form a heterotetramer which is stabilized by phosphatidylinositol binding and which binds to the GET3 homodimer.

It localises to the endoplasmic reticulum membrane. Its subcellular location is the golgi apparatus membrane. Its function is as follows. Required for the post-translational delivery of tail-anchored (TA) proteins to the endoplasmic reticulum. Together with GET2, acts as a membrane receptor for soluble GET3, which recognizes and selectively binds the transmembrane domain of TA proteins in the cytosol. The GET complex cooperates with the HDEL receptor ERD2 to mediate the ATP-dependent retrieval of resident ER proteins that contain a C-terminal H-D-E-L retention signal from the Golgi to the ER. In Debaryomyces hansenii (strain ATCC 36239 / CBS 767 / BCRC 21394 / JCM 1990 / NBRC 0083 / IGC 2968) (Yeast), this protein is Golgi to ER traffic protein 1.